We begin with the raw amino-acid sequence, 469 residues long: RNA-editing ligase 1, mitochondrial (469 aa).

The N-terminal 44 residues, Met1–Thr44, are a transit peptide targeting the mitochondrion. Residues Ile59–Ile61, Glu86–Asn92, Asn92, Arg111, Glu159, Phe209, and Lys307–Arg309 contribute to the ATP site. The N6-AMP-lysine intermediate role is filled by Lys87. The tract at residues Ala450–Glu469 is disordered.

This sequence belongs to the RNA ligase 2 family. Component of the RNA editing complex (editosome), a 1600 kDa complex composed of at least 20 proteins. Interacts with terminal uridylyltransferase MEAT1.

The protein localises to the mitochondrion. It carries out the reaction ATP + (ribonucleotide)n-3'-hydroxyl + 5'-phospho-(ribonucleotide)m = (ribonucleotide)n+m + AMP + diphosphate.. In terms of biological role, essential for RNA editing. RNA editing in kinetoplastid mitochondria inserts and deletes uridylates at multiple sites in pre-mRNAs as directed by guide RNAs. The protein is RNA-editing ligase 1, mitochondrial (REL1) of Trypanosoma brucei brucei (strain 927/4 GUTat10.1).